The sequence spans 156 residues: Small ribosomal subunit protein uS7 (156 aa).

The protein belongs to the universal ribosomal protein uS7 family. As to quaternary structure, part of the 30S ribosomal subunit. Contacts proteins S9 and S11.

In terms of biological role, one of the primary rRNA binding proteins, it binds directly to 16S rRNA where it nucleates assembly of the head domain of the 30S subunit. Is located at the subunit interface close to the decoding center, probably blocks exit of the E-site tRNA. The sequence is that of Small ribosomal subunit protein uS7 from Idiomarina loihiensis (strain ATCC BAA-735 / DSM 15497 / L2-TR).